The chain runs to 158 residues: NADH-quinone oxidoreductase subunit B (158 aa).

[4Fe-4S] cluster contacts are provided by Cys-37, Cys-38, Cys-102, and Cys-132.

The protein belongs to the complex I 20 kDa subunit family. In terms of assembly, NDH-1 is composed of 14 different subunits. Subunits NuoB, C, D, E, F, and G constitute the peripheral sector of the complex. [4Fe-4S] cluster serves as cofactor.

It localises to the cell inner membrane. The catalysed reaction is a quinone + NADH + 5 H(+)(in) = a quinol + NAD(+) + 4 H(+)(out). Its function is as follows. NDH-1 shuttles electrons from NADH, via FMN and iron-sulfur (Fe-S) centers, to quinones in the respiratory chain. Couples the redox reaction to proton translocation (for every two electrons transferred, four hydrogen ions are translocated across the cytoplasmic membrane), and thus conserves the redox energy in a proton gradient. In Leptothrix cholodnii (strain ATCC 51168 / LMG 8142 / SP-6) (Leptothrix discophora (strain SP-6)), this protein is NADH-quinone oxidoreductase subunit B.